The primary structure comprises 174 residues: Secretion monitor (174 aa).

A signal peptide spans 1 to 35 (MGILNLWRQFGRRYFWSHLLLGVVAASIGAPTILA).

Belongs to the SecM family.

It is found in the cytoplasm. The protein resides in the cytosol. It localises to the periplasm. Functionally, regulates secA expression by translational coupling of the secM secA operon. Translational pausing at a specific Pro residue 5 residues before the end of the protein may allow disruption of a mRNA repressor helix that normally suppresses secA translation initiation. The protein is Secretion monitor of Photorhabdus laumondii subsp. laumondii (strain DSM 15139 / CIP 105565 / TT01) (Photorhabdus luminescens subsp. laumondii).